We begin with the raw amino-acid sequence, 115 residues long: Immunoglobulin kappa chain variable 12-41 (115 aa).

Positions 1 to 20 are cleaved as a signal peptide; the sequence is MSVLTQVLALLLLWLTGARC. The framework-1 stretch occupies residues 21-43; sequence DIQMTQSPASLSASVGETVTITC. A disulfide bridge links C43 with C108. The complementarity-determining-1 stretch occupies residues 44–54; sequence RASGNIHNYLA. Residues 55 to 69 form a framework-2 region; it reads WYQQKQGKSPQLLVY. Residues 70-76 are complementarity-determining-2; that stretch reads NAKTLAD. The interval 77–108 is framework-3; that stretch reads GVPSRFSGSGSGTQYSLKINSLQPEDFGSYYC. The segment at 109–115 is complementarity-determining-3; sequence QHFWSTP.

The protein is Immunoglobulin kappa chain variable 12-41 of Mus musculus (Mouse).